The chain runs to 289 residues: Delta-sarcoglycan (289 aa).

Topologically, residues M1–Y35 are cytoplasmic. Residues F36–L56 form a helical; Signal-anchor for type II membrane protein membrane-spanning segment. The Extracellular portion of the chain corresponds to K57–L289. Residues N60 and N108 are each glycosylated (N-linked (GlcNAc...) asparagine). 2 disulfides stabilise this stretch: C263–C288 and C265–C281. An N-linked (GlcNAc...) asparagine glycan is attached at N284.

Belongs to the sarcoglycan beta/delta/gamma/zeta family. Interacts with FLNC and DAG1. Cross-link to form 2 major subcomplexes: one consisting of SGCB, SGCD and SGCG and the other consisting of SGCB and SGCD. The association between SGCB and SGCG is particularly strong while SGCA is loosely associated with the other sarcoglycans. Post-translationally, glycosylated. Disulfide bonds are present. As to expression, most strongly expressed in skeletal and cardiac muscle. Also detected in smooth muscle. Weak expression in brain and lung.

It is found in the cell membrane. The protein localises to the sarcolemma. The protein resides in the cytoplasm. Its subcellular location is the cytoskeleton. Functionally, component of the sarcoglycan complex, a subcomplex of the dystrophin-glycoprotein complex which forms a link between the F-actin cytoskeleton and the extracellular matrix. This chain is Delta-sarcoglycan (SGCD), found in Homo sapiens (Human).